The following is a 1072-amino-acid chain: Dyslexia-associated protein KIAA0319 (1072 aa).

Residues 1-20 form the signal peptide; that stretch reads MAPPTGVLSSLLLLVTIAGC. Residues 21 to 99 enclose the MANSC domain; that stretch reads ARKQCSEGRT…PKKMGPIRSY (79 aa). Residues 21 to 955 are Extracellular-facing; that stretch reads ARKQCSEGRT…WDGESNCEWS (935 aa). Disordered stretches follow at residues 168–277 and 295–327; these read LQPS…SLPP and VTPG…SPTT. 3 N-linked (GlcNAc...) asparagine glycosylation sites follow: Asn-196, Asn-219, and Asn-262. Residues 254 to 265 are compositionally biased toward polar residues; the sequence is SQLQEQSSNSSG. The segment covering 311-320 has biased composition (low complexity); the sequence is AAPSESTPSE. 5 PKD domains span residues 341–427, 435–524, 530–620, 621–714, and 720–811; these read DNLI…VKPA, VAVV…VNNA, VANA…VQPE, NNRP…VKKE, and RARA…VQPD. Residues Asn-394, Asn-421, Asn-498, Asn-513, Asn-536, and Asn-551 are each glycosylated (N-linked (GlcNAc...) asparagine). Asn-733 carries an N-linked (GlcNAc...) asparagine glycan. The helical transmembrane segment at 956–976 threads the bilayer; the sequence is IFYVTVLAFTLIVLTGGFTWL. The Cytoplasmic segment spans residues 977–1072; the sequence is CICCCKRQKR…ASFSYCSKDR (96 aa). Residues 995-998 carry the Endocytosis signal motif; that stretch reads YTIL. The tract at residues 1045-1072 is disordered; it reads KMERGNPKVSMNGSIRNGASFSYCSKDR. Polar residues predominate over residues 1053-1072; that stretch reads VSMNGSIRNGASFSYCSKDR.

Homodimer. Interacts with AP2M1; required for clathrin-mediated endocytosis. N-glycosylated. Post-translationally, O-glycosylated. In terms of processing, shedding of the extracellular domain and intramembrane cleavage produce several proteolytic products. The intramembrane cleavage releases a soluble cytoplasmic polypeptide that translocates to the nucleolus. As to expression, detected in adult brain cortex and fetal frontal lobe (at protein level). Highly expressed in brain cortex, putamen, amygdala, hippocampus and cerebellum.

The protein localises to the cell membrane. Its subcellular location is the early endosome membrane. Functionally, involved in neuronal migration during development of the cerebral neocortex. May function in a cell autonomous and a non-cell autonomous manner and play a role in appropriate adhesion between migrating neurons and radial glial fibers. May also regulate growth and differentiation of dendrites. This chain is Dyslexia-associated protein KIAA0319 (KIAA0319), found in Homo sapiens (Human).